A 416-amino-acid polypeptide reads, in one-letter code: 2-amino-3-ketobutyrate coenzyme A ligase, mitochondrial (416 aa).

A mitochondrion-targeting transit peptide spans 1 to 18 (MWASFMWHGALSPGRRAH). Lys-42 carries the N6-acetyllysine; alternate modification. Position 42 is an N6-succinyllysine; alternate (Lys-42). Position 131 to 132 (131 to 132 (CF)) interacts with pyridoxal 5'-phosphate. A substrate-binding site is contributed by His-156. Lys-184 carries the N6-acetyllysine; alternate modification. N6-succinyllysine; alternate is present on Lys-184. Pyridoxal 5'-phosphate contacts are provided by residues Ser-203, 259–262 (TLGK), and 292–293 (SN). An N6-(pyridoxal phosphate)lysine modification is found at Lys-262. Lys-323 and Lys-365 each carry N6-succinyllysine. At Lys-380 the chain carries N6-acetyllysine; alternate. Lys-380 carries the N6-succinyllysine; alternate modification. Arg-386 is a binding site for substrate.

It belongs to the class-II pyridoxal-phosphate-dependent aminotransferase family. The cofactor is pyridoxal 5'-phosphate.

The protein resides in the mitochondrion. Its subcellular location is the nucleus. The enzyme catalyses glycine + acetyl-CoA = (2S)-2-amino-3-oxobutanoate + CoA. Its pathway is amino-acid degradation; L-threonine degradation via oxydo-reductase pathway; glycine from L-threonine: step 2/2. Its function is as follows. Pyridoxal phosphate (PLP) dependent enzyme, which catalyzes the cleavage of 2-amino-3-oxobutanoate to glycine and acetyl-CoA. Catalyzes the second reaction step on the main metabolic degradation pathway for L-threonine. The protein is 2-amino-3-ketobutyrate coenzyme A ligase, mitochondrial (Gcat) of Mus musculus (Mouse).